Consider the following 483-residue polypeptide: UDP-N-acetylmuramoyl-L-alanyl-D-glutamate--2,6-diaminopimelate ligase (483 aa).

UDP-N-acetyl-alpha-D-muramoyl-L-alanyl-D-glutamate is bound at residue serine 29. ATP is bound at residue 112–118 (GTNGKTT). UDP-N-acetyl-alpha-D-muramoyl-L-alanyl-D-glutamate-binding positions include 154–155 (TT), serine 181, and arginine 189. The residue at position 221 (lysine 221) is an N6-carboxylysine. Meso-2,6-diaminopimelate-binding positions include arginine 380, 404–407 (DNPR), glycine 454, and glutamate 458. The Meso-diaminopimelate recognition motif signature appears at 404–407 (DNPR).

It belongs to the MurCDEF family. MurE subfamily. It depends on Mg(2+) as a cofactor. In terms of processing, carboxylation is probably crucial for Mg(2+) binding and, consequently, for the gamma-phosphate positioning of ATP.

Its subcellular location is the cytoplasm. It carries out the reaction UDP-N-acetyl-alpha-D-muramoyl-L-alanyl-D-glutamate + meso-2,6-diaminopimelate + ATP = UDP-N-acetyl-alpha-D-muramoyl-L-alanyl-gamma-D-glutamyl-meso-2,6-diaminopimelate + ADP + phosphate + H(+). The protein operates within cell wall biogenesis; peptidoglycan biosynthesis. Functionally, catalyzes the addition of meso-diaminopimelic acid to the nucleotide precursor UDP-N-acetylmuramoyl-L-alanyl-D-glutamate (UMAG) in the biosynthesis of bacterial cell-wall peptidoglycan. This Clostridium botulinum (strain ATCC 19397 / Type A) protein is UDP-N-acetylmuramoyl-L-alanyl-D-glutamate--2,6-diaminopimelate ligase.